A 461-amino-acid polypeptide reads, in one-letter code: MLKIFNTMSRQKEEFKPIHAGEVGMYVCGITVYDLCHIGHGRTFIAFDVVARYLRFLGYKLKYVRNITDIDDKIIKRANENGEDFVALVDRMVTEMHKDFDALNILRPDSEPRATQHIPEIIEIVEQLIARGHAYVAGNGDVMFAVESDADYGKLSRQDLEQLQAGARVEVADSKRNPMDFVLWKMSKPGEPSWPSPWGDGRPGWHIECSAMNCKQLGSHFDIHGGGSDLMFPHHENEIAQSTCAHDGEYVNYWMHSGMVMVDREKMSKSLGNFFTVRDVLQHYDAETVRYFLMSGHYRSQLNYSEENLKQARASLERLYTALRGTDASATVAGGEAFEARFVEAMNDDFNTPEAYSVLFDMAREVNRLKAEDSSAANQLAAHLRKLAAVLGLLEQEPEQFLQSGAQANDDEVAEIEALIVKRLEARKAKDWAAADAARDRLNEMGIILEDGPQGTTWRRK.

Position 28 (cysteine 28) interacts with Zn(2+). A 'HIGH' region motif is present at residues 30–40; the sequence is ITVYDLCHIGH. Zn(2+) contacts are provided by cysteine 209, histidine 234, and glutamate 238. The 'KMSKS' region motif lies at 266–270; that stretch reads KMSKS. Lysine 269 contributes to the ATP binding site.

It belongs to the class-I aminoacyl-tRNA synthetase family. As to quaternary structure, monomer. It depends on Zn(2+) as a cofactor.

The protein localises to the cytoplasm. It carries out the reaction tRNA(Cys) + L-cysteine + ATP = L-cysteinyl-tRNA(Cys) + AMP + diphosphate. The protein is Cysteine--tRNA ligase of Cronobacter sakazakii (strain ATCC BAA-894) (Enterobacter sakazakii).